The following is a 203-amino-acid chain: Amelogenin, Y isoform (203 aa).

The signal sequence occupies residues 1–16; that stretch reads MGTWILFACLVGAAFA. A disordered region spans residues 116–180; sequence MPVPGQQSMT…PPLPPMFPMR (65 aa). Positions 120-130 are enriched in polar residues; it reads GQQSMTPTQHH. Positions 131–142 are enriched in low complexity; it reads QPNLPLPAQQPF. Pro residues predominate over residues 143 to 180; the sequence is QPQPVQPLPHQPMQPQPPVQPMQPLLPQPPLPPMFPMR.

The protein belongs to the amelogenin family.

Its subcellular location is the secreted. It localises to the extracellular space. The protein resides in the extracellular matrix. Functionally, plays a role in biomineralization. Seems to regulate the formation of crystallites during the secretory stage of tooth enamel development. Thought to play a major role in the structural organization and mineralization of developing enamel. This chain is Amelogenin, Y isoform (AMELY), found in Pan troglodytes (Chimpanzee).